The sequence spans 70 residues: Large ribosomal subunit protein bL28 (70 aa).

The interval 1–26 is disordered; sequence MAKRCEVCGKAPRSGNTVSHSDKKSG.

It belongs to the bacterial ribosomal protein bL28 family.

The sequence is that of Large ribosomal subunit protein bL28 (rpmB) from Thermotoga maritima (strain ATCC 43589 / DSM 3109 / JCM 10099 / NBRC 100826 / MSB8).